Reading from the N-terminus, the 351-residue chain is Spermidine/putrescine import ATP-binding protein PotA (351 aa).

An ABC transporter domain is found at 6–236 (LELRNVTKEY…PENAWVANFI (231 aa)). 38–45 (GPSGCGKT) is an ATP binding site.

It belongs to the ABC transporter superfamily. Spermidine/putrescine importer (TC 3.A.1.11.1) family. In terms of assembly, the complex is composed of two ATP-binding proteins (PotA), two transmembrane proteins (PotB and PotC) and a solute-binding protein (PotD).

It is found in the cell membrane. The enzyme catalyses ATP + H2O + polyamine-[polyamine-binding protein]Side 1 = ADP + phosphate + polyamineSide 2 + [polyamine-binding protein]Side 1.. Its function is as follows. Part of the ABC transporter complex PotABCD involved in spermidine/putrescine import. Responsible for energy coupling to the transport system. The polypeptide is Spermidine/putrescine import ATP-binding protein PotA (Mycoplasma capricolum subsp. capricolum (strain California kid / ATCC 27343 / NCTC 10154)).